The primary structure comprises 319 residues: Serpentine receptor class X-43 (319 aa).

The next 7 membrane-spanning stretches (helical) occupy residues 28 to 48 (VVSMECLTGLFLLVAVIIGCF), 67 to 87 (AQLMACINSGSFSTLGVLLNI), 95 to 115 (YLFGNFSIFLLPVILISFLLM), 138 to 158 (IRTFIVFNWLLSLVAGSYLVV), 164 to 184 (FVFYHFGWLFAGSVSVKCGTL), 194 to 214 (TVLSITIVGLDVVTLVALMAF), and 267 to 287 (FFFTTSFSSNLLHVFDPVVVF).

This sequence belongs to the G-protein coupled receptor 1 family. As to expression, expressed in ASI sensory neurons.

The protein localises to the cell membrane. Its subcellular location is the perikaryon. It localises to the cell projection. It is found in the cilium. In terms of biological role, receptor for the ascaroside pheromone icas#9 which suppresses exploratory forgaging behavior. In response to ascaroside icas#9, may furthermore play a role in the expression of genes in the TGF-beta signaling pathway, such as daf-7, and in insulin signaling pathway, such as daf-28, which may in turn contribute to exploratory behavior. In Caenorhabditis elegans, this protein is Serpentine receptor class X-43.